The primary structure comprises 196 residues: Small ribosomal subunit protein uS4c (196 aa).

Positions 15 to 36 (LGTLPGLTSKRPRSGSDLKNPL) are disordered. The region spanning 89–150 (MRLDNILFRL…KQRSKALIQN (62 aa)) is the S4 RNA-binding domain.

It belongs to the universal ribosomal protein uS4 family. Part of the 30S ribosomal subunit. Contacts protein S5. The interaction surface between S4 and S5 is involved in control of translational fidelity.

The protein localises to the plastid. The protein resides in the chloroplast. Functionally, one of the primary rRNA binding proteins, it binds directly to 16S rRNA where it nucleates assembly of the body of the 30S subunit. In terms of biological role, with S5 and S12 plays an important role in translational accuracy. This Yucca filamentosa (Bear-grass) protein is Small ribosomal subunit protein uS4c (rps4).